The primary structure comprises 476 residues: Argininosuccinate lyase (476 aa).

The protein belongs to the lyase 1 family. Argininosuccinate lyase subfamily.

Its subcellular location is the cytoplasm. It carries out the reaction 2-(N(omega)-L-arginino)succinate = fumarate + L-arginine. Its pathway is amino-acid biosynthesis; L-arginine biosynthesis; L-arginine from L-ornithine and carbamoyl phosphate: step 3/3. This is Argininosuccinate lyase from Thermobifida fusca (strain YX).